The following is a 243-amino-acid chain: Bidirectional sugar transporter SWEET2a (243 aa).

An N-terminal signal peptide occupies residues 1-15 (MMNALGLSVAATSTG). The Extracellular portion of the chain corresponds to 16 to 24 (SPFHDVCCY). Residues 25 to 45 (GAGIAGNIFALVLFISPLPTF) form a helical membrane-spanning segment. One can recognise a MtN3/slv 1 domain in the interval 27 to 112 (GIAGNIFALV…ATFIAFADAK (86 aa)). Over 46-56 (KRIVRNGSTEQ) the chain is Cytoplasmic. The helical transmembrane segment at 57 to 79 (FSAMPYIYSLLNCLICLWYGLPF) threads the bilayer. The Extracellular portion of the chain corresponds to 80–90 (VSYGVVLVATV). The helical transmembrane segment at 91-111 (NSIGALFQLAYTATFIAFADA) threads the bilayer. The Cytoplasmic portion of the chain corresponds to 112 to 118 (KNRVKVS). Residues 119 to 139 (SLLVMVFGVFALIVYVSLALF) form a helical membrane-spanning segment. Over 140 to 146 (DHQTRQL) the chain is Extracellular. The chain crosses the membrane as a helical span at residues 147–167 (FVGYLSVASLIFMFASPLSII). Residues 147–229 (FVGYLSVASL…QLVLYGYFRK (83 aa)) enclose the MtN3/slv 2 domain. The Cytoplasmic portion of the chain corresponds to 168–180 (NLVIRTKSVEYMP). The helical transmembrane segment at 181 to 201 (FYLSLSMFLMSVSFFAYGVLL) threads the bilayer. Residues 202–203 (HD) are Extracellular-facing. The chain crosses the membrane as a helical span at residues 204–224 (FFIYIPNGIGTVLGVIQLVLY). Topologically, residues 225-243 (GYFRKGSREDSLPLLVTHT) are cytoplasmic.

This sequence belongs to the SWEET sugar transporter family. Forms homooligomers and/or heterooligomers.

The protein resides in the cell membrane. Functionally, mediates both low-affinity uptake and efflux of sugar across the plasma membrane. The protein is Bidirectional sugar transporter SWEET2a (SWEET2A) of Oryza sativa subsp. indica (Rice).